A 278-amino-acid polypeptide reads, in one-letter code: Fe(II)/2-oxoglutarate-dependent dioxygenase nvfI (278 aa).

The protein belongs to the asaB hydroxylase/desaturase family.

It catalyses the reaction asnovolin A + 2-oxoglutarate + 2 O2 = fumigatonoid A + succinate + CO2. The protein operates within secondary metabolite biosynthesis; terpenoid biosynthesis. In terms of biological role, fe(II)/2-oxoglutarate-dependent dioxygenase; part of the gene cluster that mediates the biosynthesis of novofumigatonin, a heavily oxygenated meroterpenoid containing a unique orthoester moiety. The first step of the pathway is the synthesis of 3,5-dimethylorsellinic acid (DMOA) by the polyketide synthase nvfA via condensation of one acetyl-CoA starter unit with 3 malonyl-CoA units and 2 methylations. DMOA is then converted to farnesyl-DMOA by the farnesyltransferase nvfB. Epoxydation by FAD-dependent monooxygenase nvfK, followed by a protonation-initiated cyclization catalyzed by the terpene cyclase nvfL leads to the production of asnavolin H. The short chain dehydrogenase nvfC then as a 3-OH dehydrogenase of asnovolin H to yield chemesin D. There are two branches to synthesize asnovolin A from chemesin D. In one branch, chemesin D undergoes Baeyer-Villiger oxidation by nvfH, methylation by nvfJ, and enoyl reduction by the nvfM D enoylreductase that reduces the double bond between C-5'and C-6', to form respectively asnovolin I, asnovolin K, and asnovolin A. In the other branch, the methylation precedes the Baeyer-Villiger oxidation and the enoyl reduction to yield asnovolin A via the asnovolin J intermediate. Asnovolin A is further converted to fumigatonoid A by the Fe(II)/2-oxoglutarate-dependent dioxygenase nvfI that catalyzes an endoperoxidation reaction. The alpha/beta hydrolase nvfD then acts as an epimerase that converts fumigatonoid A to its C-5' epimer, which then undergoes spontaneous or nvfD-catalyzed lactonization. The following step utilizes the ketoreductase nvfG to produce fumigatonoid B. The dioxygenase nvfE further converts fumigatonoid B into fumigatonoid C. Finally the Fe(II)/2-oxoglutarate-dependent dioxygenase nvfF catalyzes two rounds of oxidation to transform fumigatonoid C into the end product, novofumigatonin A. This chain is Fe(II)/2-oxoglutarate-dependent dioxygenase nvfI, found in Aspergillus novofumigatus (strain IBT 16806).